The primary structure comprises 1854 residues: Calcium-channel protein cch1 (1854 aa).

Residues 1-15 (MSSSSNSDPSSSPDN) are compositionally biased toward low complexity. The segment at 1 to 33 (MSSSSNSDPSSSPDNTDFIPLKDNPKDTSSYIN) is disordered. N-linked (GlcNAc...) asparagine glycosylation occurs at Asn-40. 3 consecutive transmembrane segments (helical) span residues 184-204 (HPLY…LLMI), 220-240 (IIVI…LFGF), and 274-294 (DFVA…QGIF). The N-linked (GlcNAc...) asparagine glycan is linked to Asn-310. 8 consecutive transmembrane segments (helical) span residues 328–348 (PLVQ…ILGV), 427–447 (FFNS…TDIM), 461–481 (LFII…IAVV), 514–534 (YLFY…VTLC), 549–569 (LIFY…RFFA), 581–601 (YTNL…LPSI), 606–626 (VAFG…ILLI), and 642–662 (QLLN…LCAV). Asn-699 carries N-linked (GlcNAc...) asparagine glycosylation. The chain crosses the membrane as a helical span at residues 723-743 (FFTLWFLFSNNVVLSMFIAVI). The N-linked (GlcNAc...) asparagine glycan is linked to Asn-786. 3 helical membrane passes run 946 to 966 (VFIY…TPIY), 980 to 1000 (FVWT…IKII), and 1021 to 1041 (FFVL…HALL). An N-linked (GlcNAc...) asparagine glycan is attached at Asn-1058. 2 consecutive transmembrane segments (helical) span residues 1075–1095 (FFKI…FALW) and 1148–1168 (FPHA…VDIM). N-linked (GlcNAc...) asparagine glycosylation occurs at Asn-1184. 4 consecutive transmembrane segments (helical) span residues 1193–1213 (FVLF…AIII), 1274–1294 (FTGL…PCPI), 1302–1322 (SIFL…VYGL), and 1331–1351 (FWNM…IAIL). The N-linked (GlcNAc...) asparagine glycan is linked to Asn-1356. The next 3 helical transmembrane spans lie at 1358–1378 (SLTL…IPKF), 1393–1413 (PSIF…AIAF), and 1486–1506 (FIAW…TVVF). Residues Asn-1508 and Asn-1773 are each glycosylated (N-linked (GlcNAc...) asparagine). The disordered stretch occupies residues 1764 to 1792 (TIASGEGDDNHSVEDHLKVPTDNEPRRSP). Positions 1771-1790 (DDNHSVEDHLKVPTDNEPRR) are enriched in basic and acidic residues.

The protein belongs to the calcium channel alpha-1 subunit (TC 1.A.1.11) family. As to quaternary structure, interacts with yam8 to form a Ca(2+) influx channel.

Its subcellular location is the cell membrane. Its function is as follows. Voltage-gated, high-affinity calcium channel that functions together with yam8 to mediate calcium entry into cells. Required during conditions of environmental stress. This is Calcium-channel protein cch1 (cch1) from Schizosaccharomyces pombe (strain 972 / ATCC 24843) (Fission yeast).